The following is a 231-amino-acid chain: Lytic polysaccharide monooxygenase-like protein X325 (231 aa).

An N-terminal signal peptide occupies residues 1-17 (MRLSLLVTLALTALIEA). His-18 lines the Cu(2+) pocket. Residues Asn-34, Asn-55, Asn-98, Asn-133, Asn-174, and Asn-180 are each glycosylated (N-linked (GlcNAc...) asparagine). 2 cysteine pairs are disulfide-bonded: Cys-47–Cys-157 and Cys-122–Cys-178. A lipid anchor (GPI-anchor amidated isoleucine) is attached at Ile-202. The propeptide at 203 to 231 (ASTTTGSAPRYYSWAGWLPLVAGAIWMAL) is removed in mature form.

Belongs to the X325 family. Requires Cu(2+) as cofactor.

It localises to the cell membrane. Functionally, lytic polysaccharide monooxygenase-like protein that has diverged to biological functions other than polysaccharide degradation since it does not perform oxidative cleavage of polysaccharides. Acts as a cell surface-bound protein that functions in the copper-accumulation pathway. May also act as the major cell wall sensor that regulates MAP kinase-dependent hyphal anastomosis, the fusion of hyphal cells. The sequence is that of Lytic polysaccharide monooxygenase-like protein X325 from Hypocrea jecorina (strain QM6a) (Trichoderma reesei).